A 186-amino-acid polypeptide reads, in one-letter code: ATP synthase subunit delta (186 aa).

The protein belongs to the ATPase delta chain family. As to quaternary structure, F-type ATPases have 2 components, F(1) - the catalytic core - and F(0) - the membrane proton channel. F(1) has five subunits: alpha(3), beta(3), gamma(1), delta(1), epsilon(1). F(0) has three main subunits: a(1), b(2) and c(10-14). The alpha and beta chains form an alternating ring which encloses part of the gamma chain. F(1) is attached to F(0) by a central stalk formed by the gamma and epsilon chains, while a peripheral stalk is formed by the delta and b chains.

It is found in the cell inner membrane. F(1)F(0) ATP synthase produces ATP from ADP in the presence of a proton or sodium gradient. F-type ATPases consist of two structural domains, F(1) containing the extramembraneous catalytic core and F(0) containing the membrane proton channel, linked together by a central stalk and a peripheral stalk. During catalysis, ATP synthesis in the catalytic domain of F(1) is coupled via a rotary mechanism of the central stalk subunits to proton translocation. Functionally, this protein is part of the stalk that links CF(0) to CF(1). It either transmits conformational changes from CF(0) to CF(1) or is implicated in proton conduction. The protein is ATP synthase subunit delta of Bacteroides thetaiotaomicron (strain ATCC 29148 / DSM 2079 / JCM 5827 / CCUG 10774 / NCTC 10582 / VPI-5482 / E50).